Consider the following 932-residue polypeptide: DNA mismatch repair protein MutS (932 aa).

615–622 provides a ligand contact to ATP; sequence GPNMAGKS.

It belongs to the DNA mismatch repair MutS family.

This protein is involved in the repair of mismatches in DNA. It is possible that it carries out the mismatch recognition step. This protein has a weak ATPase activity. This is DNA mismatch repair protein MutS from Clostridium botulinum (strain Loch Maree / Type A3).